The sequence spans 186 residues: UPF0340 protein SZO_02480 (186 aa).

It belongs to the UPF0340 family.

The protein is UPF0340 protein SZO_02480 of Streptococcus equi subsp. zooepidemicus (strain H70).